The chain runs to 152 residues: Small heat shock protein HspA (152 aa).

The region spanning 29 to 139 (TAGEANYPPC…KPRRIPIDNL (111 aa)) is the sHSP domain.

This sequence belongs to the small heat shock protein (HSP20) family.

The polypeptide is Small heat shock protein HspA (hspA) (Bradyrhizobium diazoefficiens (strain JCM 10833 / BCRC 13528 / IAM 13628 / NBRC 14792 / USDA 110)).